The chain runs to 270 residues: tRNA pseudouridine synthase A (270 aa).

D60 (nucleophile) is an active-site residue. The RNA binding stretch occupies residues 107 to 111 (FHARF). Substrate is bound at residue Y118. Residues 168-172 (QCQSR) form an interaction with tRNA region.

This sequence belongs to the tRNA pseudouridine synthase TruA family. In terms of assembly, homodimer.

The enzyme catalyses uridine(38/39/40) in tRNA = pseudouridine(38/39/40) in tRNA. Functionally, formation of pseudouridine at positions 38, 39 and 40 in the anticodon stem and loop of transfer RNAs. This Klebsiella pneumoniae (strain 342) protein is tRNA pseudouridine synthase A.